Consider the following 1876-residue polypeptide: Phenolphthiocerol/phthiocerol polyketide synthase subunit A (1876 aa).

One can recognise a Carrier 1 domain in the interval 9-83; sequence ADLRHWLIDY…ALAAYLAAPE (75 aa). S43 is modified (O-(pantetheine 4'-phosphoryl)serine). A Ketosynthase family 3 (KS3) domain is found at 101 to 526; that stretch reads DEPIAVVGMG…GTNAHVVIEQ (426 aa). Active-site for beta-ketoacyl synthase activity residues include C273, H408, and H448. Positions 624–950 are acyltransferase; the sequence is EGSPGPGTVF…NLNKAHTIHP (327 aa). Residue S720 is the For malonyltransferase activity of the active site. The interval 997-1112 is N-terminal hotdog fold; sequence HTTVATVSAS…AQLSSSPSDS (116 aa). The 271-residue stretch at 997 to 1267 folds into the PKS/mFAS DH domain; that stretch reads HTTVATVSAS…YRALDFGLDV (271 aa). The active-site Proton acceptor; for dehydratase activity is the H1027. A disordered region spans residues 1104-1130; the sequence is QLSSSPSDSASSLNEHHRANGQPPERA. The span at 1106–1115 shows a compositional bias: low complexity; the sequence is SSSPSDSASS. Residues 1130–1267 form a C-terminal hotdog fold region; the sequence is AHRDLIPDLA…YRALDFGLDV (138 aa). The active-site Proton donor; for dehydratase activity is the D1186. The beta-ketoacyl reductase stretch occupies residues 1491–1728; that stretch reads AAYLITGGLG…DGYDVAQAVV (238 aa). 1492-1551 lines the NADP(+) pocket; sequence AYLITGGLGALGLLMADWLADRGAHRLVLTGRTPLPPRRDWQLDTLDTELRRRIDAIRAL. The region spanning 1759–1836 is the Carrier 2 domain; it reads EVRSELEQGL…SLASYLAKRV (78 aa). An O-(pantetheine 4'-phosphoryl)serine modification is found at S1796.

It depends on NADP(+) as a cofactor. The cofactor is pantetheine 4'-phosphate.

The catalysed reaction is icosanoyl-[(phenol)carboxyphthiodiolenone synthase] + 2 (S)-methylmalonyl-CoA + 3 malonyl-CoA + 5 NADPH + 10 H(+) = C32-carboxyphthiodiolenone-[(phenol)carboxyphthiodiolenone synthase] + 5 CO2 + 5 NADP(+) + 5 CoA + 2 H2O. It carries out the reaction docosanoyl-[(phenol)carboxyphthiodiolenone synthase] + 2 (S)-methylmalonyl-CoA + 3 malonyl-CoA + 5 NADPH + 10 H(+) = C34-carboxyphthiodiolenone-[(phenol)carboxyphthiodiolenone synthase] + 5 CO2 + 5 NADP(+) + 5 CoA + 2 H2O. It catalyses the reaction 17-(4-hydroxyphenyl)heptadecanoyl-[(phenol)carboxyphthiodiolenone synthase] + 2 (S)-methylmalonyl-CoA + 3 malonyl-CoA + 5 NADPH + 10 H(+) = C35-(phenol)carboxyphthiodiolenone-[(phenol)carboxyphthiodiolenone synthase] + 5 CO2 + 5 NADP(+) + 5 CoA + 2 H2O. The enzyme catalyses 19-(4-hydroxyphenyl)nonadecanoyl-[(phenol)carboxyphthiodiolenone synthase] + 2 (S)-methylmalonyl-CoA + 3 malonyl-CoA + 5 NADPH + 10 H(+) = C37-(phenol)carboxyphthiodiolenone-[(phenol)carboxyphthiodiolenone synthase] + 5 CO2 + 5 NADP(+) + 5 CoA + 2 H2O. It functions in the pathway lipid metabolism; fatty acid biosynthesis. Part of the PpsABCDE complex involved in the biosynthesis of the lipid core common to phthiocerols and phenolphthiocerols by successive additions of malonyl-CoA or methylmalonyl-CoA extender units. PpsA can accept as substrate the activated forms of either icosanoyl (C20), docosanoyl (C22) or lignoceroyl (C24) groups from FadD26, or a (4-hydroxyphenyl)-C17 or (4-hydroxyphenyl)-C19 fatty acyl from FadD29. PpsA initiates the biosynthesis and extends its substrate using a malonyl-CoA extender unit. The PpsB and PpsC proteins add the second and third malonyl-CoA extender units. PpsD adds an (R)-methylmalonyl unit and PpsE adds a second (R)-methylmalonyl unit. The incorporation of the methylmalonyl units results in formation of two branched methyl groups in the elongated product. The sequence is that of Phenolphthiocerol/phthiocerol polyketide synthase subunit A (ppsA) from Mycobacterium bovis (strain ATCC BAA-935 / AF2122/97).